We begin with the raw amino-acid sequence, 193 residues long: Ribosome hibernation promotion factor (193 aa).

This sequence belongs to the HPF/YfiA ribosome-associated protein family. Long HPF subfamily. Interacts with 100S ribosomes.

Its subcellular location is the cytoplasm. Its function is as follows. Might modulate either transcription and/or translation. Required for dimerization of active 70S ribosomes into 100S ribosomes in stationary phase; 100S ribosomes are translationally inactive and sometimes present during exponential growth. The chain is Ribosome hibernation promotion factor from Picosynechococcus sp. (strain ATCC 27264 / PCC 7002 / PR-6) (Agmenellum quadruplicatum).